The sequence spans 193 residues: 3-isopropylmalate dehydratase small subunit (193 aa).

Belongs to the LeuD family. LeuD type 1 subfamily. Heterodimer of LeuC and LeuD.

It carries out the reaction (2R,3S)-3-isopropylmalate = (2S)-2-isopropylmalate. The protein operates within amino-acid biosynthesis; L-leucine biosynthesis; L-leucine from 3-methyl-2-oxobutanoate: step 2/4. Catalyzes the isomerization between 2-isopropylmalate and 3-isopropylmalate, via the formation of 2-isopropylmaleate. In Bacillus cytotoxicus (strain DSM 22905 / CIP 110041 / 391-98 / NVH 391-98), this protein is 3-isopropylmalate dehydratase small subunit.